Here is a 515-residue protein sequence, read N- to C-terminus: MRNIKFFDTTLRDGEQSAGVNLNLQEKLEIARQLERLRVDIIEAGFPASSKGDFEAVKQIAETVRTCSVTGLSRSVRSDIDAAWEALKGGAEPRLHLFIATSPIHMVHKLRMTPEQVIEAAVEAVKYAKRFFPIVQWSAEDACRSELPFLAKIVAEVIKAGASVINIPDTVGYITPKEYGEIFLYLQNNVQNIENVSLSAHCHDDLGMAVVNSLSAIEHGATQVECTINGIGERAGNAALEEIAVALHIRKDYYQVETRLNLQEIKRTSNLVSKLTGVVVPPNKAVVGKNAFAHESGIHQDGVLKEKTTYEIISPELVGVPSNSMVLGKNSGRHALRYRVEELGYTLSDEEINQLFVRFKELADKKKDITDDDLIALIFEEKFDHFKDFYQLSSIQVQYGTNQIPTAVVVLKYGKGNEIQEAATGSGSVYALYNTLERCFQTEVTLLDYRIESVGGGRDALAQVFVKVRVRDVETSGRGTAQDVLEASAKAYINAMNRVFMIEAMRAENEKVATS.

Residues 4 to 266 (IKFFDTTLRD…ETRLNLQEIK (263 aa)) enclose the Pyruvate carboxyltransferase domain. Residues D13, H201, H203, and N237 each contribute to the Mn(2+) site. The tract at residues 391 to 515 (QLSSIQVQYG…RAENEKVATS (125 aa)) is regulatory domain.

It belongs to the alpha-IPM synthase/homocitrate synthase family. LeuA type 1 subfamily. As to quaternary structure, homodimer. It depends on Mn(2+) as a cofactor.

Its subcellular location is the cytoplasm. It carries out the reaction 3-methyl-2-oxobutanoate + acetyl-CoA + H2O = (2S)-2-isopropylmalate + CoA + H(+). It participates in amino-acid biosynthesis; L-leucine biosynthesis; L-leucine from 3-methyl-2-oxobutanoate: step 1/4. Its function is as follows. Catalyzes the condensation of the acetyl group of acetyl-CoA with 3-methyl-2-oxobutanoate (2-ketoisovalerate) to form 3-carboxy-3-hydroxy-4-methylpentanoate (2-isopropylmalate). This chain is 2-isopropylmalate synthase, found in Geobacillus stearothermophilus (Bacillus stearothermophilus).